We begin with the raw amino-acid sequence, 247 residues long: Acetoacetate decarboxylase 1 (247 aa).

The Schiff-base intermediate with acetoacetate role is filled by Lys116.

This sequence belongs to the ADC family.

It catalyses the reaction acetoacetate + H(+) = acetone + CO2. Functionally, catalyzes the conversion of acetoacetate to acetone and carbon dioxide. The protein is Acetoacetate decarboxylase 1 of Mesorhizobium japonicum (strain LMG 29417 / CECT 9101 / MAFF 303099) (Mesorhizobium loti (strain MAFF 303099)).